A 204-amino-acid polypeptide reads, in one-letter code: Thymidylate kinase (204 aa).

Position 13 to 20 (13 to 20 (GIDGSGKS)) interacts with ATP.

It belongs to the thymidylate kinase family.

It carries out the reaction dTMP + ATP = dTDP + ADP. In terms of biological role, phosphorylation of dTMP to form dTDP in both de novo and salvage pathways of dTTP synthesis. This chain is Thymidylate kinase, found in Leptospira interrogans serogroup Icterohaemorrhagiae serovar copenhageni (strain Fiocruz L1-130).